The chain runs to 105 residues: Nitrogenase-stabilizing/protective protein NifW (105 aa).

It belongs to the NifW family. In terms of assembly, homotrimer; associates with NifD.

In terms of biological role, may protect the nitrogenase Fe-Mo protein from oxidative damage. The chain is Nitrogenase-stabilizing/protective protein NifW from Nostoc punctiforme (strain ATCC 29133 / PCC 73102).